Here is a 254-residue protein sequence, read N- to C-terminus: Transcription factor CAULIFLOWER (254 aa).

The MADS-box domain maps to 1–61; sequence MGRGRVEMKR…GKLFEYSSES (61 aa). The 91-residue stretch at 90-180 folds into the K-box domain; it reads QTNWSMEYSR…TKQIKERESI (91 aa). The segment covering 182–191 has biased composition (polar residues); the sequence is RTHQNQSEQQ. The tract at residues 182–205 is disordered; the sequence is RTHQNQSEQQNRSHHVAPQPQPQL.

Homodimer capable of binding to CArG-box sequences.

It is found in the nucleus. Functionally, probable transcription factor that promotes early floral meristem identity in synergy with APETALA1, FRUITFULL and LEAFY. Is required subsequently for the transition of an inflorescence meristem into a floral meristem. Seems to be partially redundant to the function of APETALA1. The chain is Transcription factor CAULIFLOWER (CAL) from Brassica rapa subsp. pekinensis (Chinese cabbage).